A 1154-amino-acid polypeptide reads, in one-letter code: FERM domain-containing protein A (1154 aa).

Disordered regions lie at residues 122–149, 432–468, 715–734, 771–794, and 961–980; these read NNNS…SSSS, NLSS…NHHN, NKNN…SSSS, SNSN…TSSS, and TNGS…NNGI. 2 consecutive FERM domains span residues 218-547 and 666-1103; these read PLHQ…PSIQ and REIV…QTKL. Gly residues predominate over residues 437 to 447; that stretch reads GGSGNGSGSGN. Over residues 448–463 the composition is skewed to low complexity; sequence GSSSSSSNSSSGNNNN.

Key regulator of adhesion dynamics, it acts as an anti-adhesive. Plays a critical role in the regulation of cell-cell adhesion, multi-cellular development and, in particular, the formation of the organising center known as the tip. Required for turnover of paxillin-adhesion sites during cell migration. Plays a major role in normal cell shape, cell-substrate adhesion and actin cytoskeleton organization. This chain is FERM domain-containing protein A (frmA), found in Dictyostelium discoideum (Social amoeba).